We begin with the raw amino-acid sequence, 239 residues long: mRNA turnover protein 4 homolog (239 aa).

Residues 215-239 (FQQMGDDLPESASESTEESDSEDDD) are disordered. Phosphoserine is present on residues Ser225, Ser229, and Ser233. Acidic residues predominate over residues 229 to 239 (STEESDSEDDD).

The protein belongs to the universal ribosomal protein uL10 family. Associates with the pre-60S ribosomal particle. Interacts with MINAS-60 (product of an alternative open reading frame of RBM10).

The protein localises to the nucleus. It localises to the nucleolus. The protein resides in the cytoplasm. Component of the ribosome assembly machinery. Nuclear paralog of the ribosomal protein P0, it binds pre-60S subunits at an early stage of assembly in the nucleolus, and is replaced by P0 in cytoplasmic pre-60S subunits and mature 80S ribosomes. The sequence is that of mRNA turnover protein 4 homolog (MRTO4) from Homo sapiens (Human).